We begin with the raw amino-acid sequence, 78 residues long: Acyl carrier protein (78 aa).

The Carrier domain occupies 2-77 (SDILERVRKI…DAVKFITEKT (76 aa)). Ser37 bears the O-(pantetheine 4'-phosphoryl)serine mark.

Belongs to the acyl carrier protein (ACP) family. In terms of processing, 4'-phosphopantetheine is transferred from CoA to a specific serine of apo-ACP by AcpS. This modification is essential for activity because fatty acids are bound in thioester linkage to the sulfhydryl of the prosthetic group.

It is found in the cytoplasm. Its pathway is lipid metabolism; fatty acid biosynthesis. In terms of biological role, carrier of the growing fatty acid chain in fatty acid biosynthesis. The sequence is that of Acyl carrier protein from Caulobacter vibrioides (strain ATCC 19089 / CIP 103742 / CB 15) (Caulobacter crescentus).